Reading from the N-terminus, the 736-residue chain is Na(+)/H(+) antiporter NhaA (736 aa).

Residues 1–387 (MNHSPQSARP…ICGYLLLRAA (387 aa)) are na(+)/H(+) antiporter NhaA. Helical transmembrane passes span 23–43 (AGGI…NSPF), 58–78 (LSLA…LVGL), 96–116 (MLPG…FAVL), 126–146 (GWAV…SLLG), 155–175 (VFLA…IAIF), 178–198 (AEIS…LFVM), 201–221 (MDVV…FFVF), 265–285 (VAFI…FKGL), 298–318 (ILLG…WLAI), 334–354 (LYGV…IGLL), and 367–387 (IGVL…LRAA). Positions 388–736 (RPDQSAANPL…EKAIWARYGL (349 aa)) are peptidase S49.

It in the N-terminal section; belongs to the NhaA Na(+)/H(+) (TC 2.A.33) antiporter family. In the C-terminal section; belongs to the peptidase S49 family.

It is found in the cell inner membrane. It catalyses the reaction Na(+)(in) + 2 H(+)(out) = Na(+)(out) + 2 H(+)(in). Its function is as follows. Na(+)/H(+) antiporter that extrudes sodium in exchange for external protons. The protein is Na(+)/H(+) antiporter NhaA of Brucella melitensis biotype 1 (strain ATCC 23456 / CCUG 17765 / NCTC 10094 / 16M).